A 105-amino-acid polypeptide reads, in one-letter code: MAAKIRRNDEVIVLAGKDKGKKGKVTKVLATGKVIVEGINLVKKHQKPVPALGIQGGIVEQEAAIDVSNVAIFNAATGKADRIGFRFEDGQKVRFFKSNGETVSN.

This sequence belongs to the universal ribosomal protein uL24 family. As to quaternary structure, part of the 50S ribosomal subunit.

Its function is as follows. One of two assembly initiator proteins, it binds directly to the 5'-end of the 23S rRNA, where it nucleates assembly of the 50S subunit. One of the proteins that surrounds the polypeptide exit tunnel on the outside of the subunit. The protein is Large ribosomal subunit protein uL24 of Vibrio vulnificus (strain YJ016).